The chain runs to 380 residues: MVNTTDFYPVPAAMAYESSVGLPLLGWNVPTEHLDLVHPHWRSFQVPNKYWHFGLAFVYFMLMCMSSLGNGIVLWIYATTKSIRTPSNMFIVNLALFDVLMLLEMPMLVVSSLFYQRPVGWELGCDIYAALGSVAGIGSAINNAAIAFDRYRTISCPIDGRLTQGQVLALIAGTWVWTLPFTLMPLLRIWSRFTAEGFLTTCSFDYLTDDEDTKVFVGCIFAWSYAFPLCLICCFYYRLIGAVREHEKMLRDQAKKMNVKSLQSNADTEAQSAEIRIAKVALTIFFLFLCSWTPYAVVAMIGAFGNRAALTPLSTMIPAVTAKIVSCIDPWVYAINHPRFRAEVQKRMKWLHLGEDARSSKSDTSSTATDRTVGNVSASA.

Residues 1-51 (MVNTTDFYPVPAAMAYESSVGLPLLGWNVPTEHLDLVHPHWRSFQVPNKYW) are Extracellular-facing. A glycan (N-linked (GlcNAc...) asparagine) is linked at N3. Residues 52–76 (HFGLAFVYFMLMCMSSLGNGIVLWI) traverse the membrane as a helical segment. The Cytoplasmic segment spans residues 77 to 88 (YATTKSIRTPSN). A helical transmembrane segment spans residues 89–115 (MFIVNLALFDVLMLLEMPMLVVSSLFY). The Extracellular portion of the chain corresponds to 116-128 (QRPVGWELGCDIY). Residues C125 and C202 are joined by a disulfide bond. Residues 129 to 148 (AALGSVAGIGSAINNAAIAF) form a helical membrane-spanning segment. Topologically, residues 149 to 166 (DRYRTISCPIDGRLTQGQ) are cytoplasmic. A helical membrane pass occupies residues 167-191 (VLALIAGTWVWTLPFTLMPLLRIWS). At 192-215 (RFTAEGFLTTCSFDYLTDDEDTKV) the chain is on the extracellular side. A helical membrane pass occupies residues 216–243 (FVGCIFAWSYAFPLCLICCFYYRLIGAV). Over 244-279 (REHEKMLRDQAKKMNVKSLQSNADTEAQSAEIRIAK) the chain is Cytoplasmic. A helical transmembrane segment spans residues 280–303 (VALTIFFLFLCSWTPYAVVAMIGA). Over 304–311 (FGNRAALT) the chain is Extracellular. Residues 312-336 (PLSTMIPAVTAKIVSCIDPWVYAIN) form a helical membrane-spanning segment. K323 is subject to N6-(retinylidene)lysine. Residues 337-380 (HPRFRAEVQKRMKWLHLGEDARSSKSDTSSTATDRTVGNVSASA) are Cytoplasmic-facing. Positions 358–380 (RSSKSDTSSTATDRTVGNVSASA) are disordered. The segment covering 362–372 (SDTSSTATDRT) has biased composition (low complexity).

The protein belongs to the G-protein coupled receptor 1 family. Opsin subfamily. Post-translationally, phosphorylated on some or all of the serine and threonine residues present in the C-terminal region.

The protein localises to the membrane. Visual pigments are the light-absorbing molecules that mediate vision. They consist of an apoprotein, opsin, covalently linked to cis-retinal. The protein is Opsin-2 (Lo2) of Schistocerca gregaria (Desert locust).